A 74-amino-acid chain; its full sequence is NADH dehydrogenase [ubiquinone] 1 alpha subcomplex assembly factor 8 (74 aa).

In terms of domain architecture, CHCH spans Leu22 to Thr69. 2 consecutive short sequence motifs (cx9C motif) follow at residues Cys25 to Cys35 and Cys51 to Cys61. Intrachain disulfides connect Cys25–Cys61 and Cys35–Cys51.

As to quaternary structure, interacts with NDUFAF5.

It is found in the mitochondrion. Its function is as follows. Involved in the assembly of mitochondrial NADH:ubiquinone oxidoreductase complex (complex I, MT-ND1). Required to stabilize NDUFAF5. This Mus musculus (Mouse) protein is NADH dehydrogenase [ubiquinone] 1 alpha subcomplex assembly factor 8.